The sequence spans 209 residues: U1 small nuclear ribonucleoprotein C (209 aa).

The segment at 4 to 36 adopts a Matrin-type zinc-finger fold; that stretch reads HYCDYCDVFLTHDSASVRKAHNSGRNHLANVRD. Over residues 72-87 the composition is skewed to low complexity; that stretch reads PQHLQAPPQGGFAPPM. Positions 72 to 209 are disordered; sequence PQHLQAPPQG…RARMMGPGGR (138 aa). 2 stretches are compositionally biased toward pro residues: residues 93–150 and 159–191; these read GGFP…PFPP and PGAP…PTNP.

This sequence belongs to the U1 small nuclear ribonucleoprotein C family. As to quaternary structure, U1 snRNP is composed of the 7 core Sm proteins B/B', D1, D2, D3, E, F and G that assemble in a heptameric protein ring on the Sm site of the small nuclear RNA to form the core snRNP, and at least 3 U1 snRNP-specific proteins U1-70K, U1-A and U1-C. U1-C interacts with U1 snRNA and the 5' splice-site region of the pre-mRNA.

It is found in the nucleus. Component of the spliceosomal U1 snRNP, which is essential for recognition of the pre-mRNA 5' splice-site and the subsequent assembly of the spliceosome. U1-C is directly involved in initial 5' splice-site recognition for both constitutive and regulated alternative splicing. The interaction with the 5' splice-site seems to precede base-pairing between the pre-mRNA and the U1 snRNA. Stimulates commitment or early (E) complex formation by stabilizing the base pairing of the 5' end of the U1 snRNA and the 5' splice-site region. In Coprinopsis cinerea (strain Okayama-7 / 130 / ATCC MYA-4618 / FGSC 9003) (Inky cap fungus), this protein is U1 small nuclear ribonucleoprotein C.